Consider the following 473-residue polypeptide: Pre-mRNA-splicing factor prp5 (473 aa).

WD repeat units follow at residues 161-191 (GHLG…KIWD), 203-233 (GHIA…KCWD), 245-275 (GHLS…RVWD), 287-317 (GHKS…RLWD), 329-358 (HHKK…KHWK), 370-399 (GHNA…CFWD), and 419-449 (DSEA…KIYK).

Belongs to the WD repeat PRL1/PRL2 family. Belongs to the 40S cdc5-associated complex (or cwf complex), a spliceosome sub-complex reminiscent of a late-stage spliceosome composed of the U2, U5 and U6 snRNAs and at least brr2, cdc5, cwf2/prp3, cwf3/syf1, cwf4/syf3, cwf5/ecm2, spp42/cwf6, cwf7/spf27, cwf8, cwf9, cwf10, cwf11, cwf12, prp45/cwf13, cwf14, cwf15, cwf16, cwf17, cwf18, cwf19, cwf20, cwf21, cwf22, cwf23, cwf24, cwf25, cwf26, cyp7/cwf27, cwf28, cwf29/ist3, lea1, msl1, prp5/cwf1, prp10, prp12/sap130, prp17, prp22, sap61, sap62, sap114, sap145, slu7, smb1, smd1, smd3, smf1, smg1 and syf2.

Its subcellular location is the nucleus. In terms of biological role, required for both cell cycle progression at G2/M and pre-mRNA splicing. Interacts genetically with the PRP4 kinase. The sequence is that of Pre-mRNA-splicing factor prp5 (prp5) from Schizosaccharomyces pombe (strain 972 / ATCC 24843) (Fission yeast).